The following is a 556-amino-acid chain: Valencene synthase (556 aa).

Over residues 1–12 (MSTQVSASSLAQ) the composition is skewed to polar residues. The segment at 1 to 24 (MSTQVSASSLAQIPQPKNRPVANF) is disordered. Aspartate 310, aspartate 314, and glutamate 462 together coordinate Mg(2+). Positions 310-314 (DDIHD) match the DDXXD motif motif.

Belongs to the terpene synthase family. Tpsa subfamily. The cofactor is Mg(2+). In terms of tissue distribution, expressed in flowers and anthers. Detected inside the pollen grains, but not in stems, leaves, tendrils, roots, seeds, pistils or caps.

Its subcellular location is the cytoplasm. It carries out the reaction (2E,6E)-farnesyl diphosphate = (+)-valencene + diphosphate. It catalyses the reaction (2E,6E)-farnesyl diphosphate = (-)-7-epi-alpha-selinene + diphosphate. It functions in the pathway secondary metabolite biosynthesis; terpenoid biosynthesis. In terms of biological role, involved in the biosynthesis of valencene, a major volatile emitted from flowers of grapevine. Can use farnesyl diphosphate as substrate, but not geranyl diphosphate or geranylgeranyl diphosphate. Produces mainly (+)-valencene and (-)-7-epi-alpha-selinene along with five minor products. The protein is Valencene synthase (ValCS) of Vitis vinifera (Grape).